The sequence spans 469 residues: Glutamate--tRNA ligase (469 aa).

The 'HIGH' region motif lies at 12–22 (PSPTGFIHLGN). The 'KMSKS' region signature appears at 244-248 (KMSKR). Position 247 (lysine 247) interacts with ATP.

This sequence belongs to the class-I aminoacyl-tRNA synthetase family. Glutamate--tRNA ligase type 1 subfamily. As to quaternary structure, monomer.

The protein localises to the cytoplasm. The catalysed reaction is tRNA(Glu) + L-glutamate + ATP = L-glutamyl-tRNA(Glu) + AMP + diphosphate. Its function is as follows. Catalyzes the attachment of glutamate to tRNA(Glu) in a two-step reaction: glutamate is first activated by ATP to form Glu-AMP and then transferred to the acceptor end of tRNA(Glu). The chain is Glutamate--tRNA ligase from Acidovorax sp. (strain JS42).